The sequence spans 233 residues: Purine nucleoside phosphorylase DeoD-type (233 aa).

Histidine 4 contributes to the a purine D-ribonucleoside binding site. Phosphate contacts are provided by residues glycine 20, arginine 24, arginine 43, and 87 to 90; that span reads RVGS. A purine D-ribonucleoside-binding positions include 178-180 and 202-203; these read EME and SD. The active-site Proton donor is the aspartate 203.

This sequence belongs to the PNP/UDP phosphorylase family. In terms of assembly, homohexamer; trimer of homodimers.

It carries out the reaction a purine D-ribonucleoside + phosphate = a purine nucleobase + alpha-D-ribose 1-phosphate. The catalysed reaction is a purine 2'-deoxy-D-ribonucleoside + phosphate = a purine nucleobase + 2-deoxy-alpha-D-ribose 1-phosphate. Functionally, catalyzes the reversible phosphorolytic breakdown of the N-glycosidic bond in the beta-(deoxy)ribonucleoside molecules, with the formation of the corresponding free purine bases and pentose-1-phosphate. This is Purine nucleoside phosphorylase DeoD-type from Bacillus subtilis (strain 168).